The primary structure comprises 116 residues: Large ribosomal subunit protein bL19 (116 aa).

It belongs to the bacterial ribosomal protein bL19 family.

This protein is located at the 30S-50S ribosomal subunit interface and may play a role in the structure and function of the aminoacyl-tRNA binding site. This Fusobacterium nucleatum subsp. nucleatum (strain ATCC 25586 / DSM 15643 / BCRC 10681 / CIP 101130 / JCM 8532 / KCTC 2640 / LMG 13131 / VPI 4355) protein is Large ribosomal subunit protein bL19.